Here is a 567-residue protein sequence, read N- to C-terminus: Membrane protein insertase YidC (567 aa).

A helical transmembrane segment spans residues 3-23 (IQRIVLFAGLAIVSYLMVLAW). The interval 32–80 (TEQVAEAQSSSDSSATNSTDDMILPEDNNAGGEEFATPETGSLASTSAN) is disordered. Low complexity predominate over residues 40–52 (SSSDSSATNSTDD). Residues 70–80 (ETGSLASTSAN) are compositionally biased toward polar residues. The next 5 helical transmembrane spans lie at 354–374 (FGWLFFISLPLFYILEWFYGL), 378–398 (WGVAIILLTVLVKAVFFHLSA), 445–465 (GGCLPILVQMPVFISLYWVLF), 485–505 (MDPYFILPILMGASMFIQMSL), and 522–542 (PLIFTVFFLWFPAGLVLYWLV).

This sequence belongs to the OXA1/ALB3/YidC family. Type 1 subfamily. In terms of assembly, interacts with the Sec translocase complex via SecD. Specifically interacts with transmembrane segments of nascent integral membrane proteins during membrane integration.

It localises to the cell inner membrane. Functionally, required for the insertion and/or proper folding and/or complex formation of integral membrane proteins into the membrane. Involved in integration of membrane proteins that insert both dependently and independently of the Sec translocase complex, as well as at least some lipoproteins. Aids folding of multispanning membrane proteins. The chain is Membrane protein insertase YidC from Marinobacter nauticus (strain ATCC 700491 / DSM 11845 / VT8) (Marinobacter aquaeolei).